The sequence spans 210 residues: Thiamine-phosphate synthase (210 aa).

4-amino-2-methyl-5-(diphosphooxymethyl)pyrimidine is bound by residues Q39 to K43 and N71. 2 residues coordinate Mg(2+): D72 and D91. A 4-amino-2-methyl-5-(diphosphooxymethyl)pyrimidine-binding site is contributed by S110. T136–T138 is a binding site for 2-[(2R,5Z)-2-carboxy-4-methylthiazol-5(2H)-ylidene]ethyl phosphate. Residue K139 coordinates 4-amino-2-methyl-5-(diphosphooxymethyl)pyrimidine. Residues G166 and V186–S187 each bind 2-[(2R,5Z)-2-carboxy-4-methylthiazol-5(2H)-ylidene]ethyl phosphate.

Belongs to the thiamine-phosphate synthase family. The cofactor is Mg(2+).

It carries out the reaction 2-[(2R,5Z)-2-carboxy-4-methylthiazol-5(2H)-ylidene]ethyl phosphate + 4-amino-2-methyl-5-(diphosphooxymethyl)pyrimidine + 2 H(+) = thiamine phosphate + CO2 + diphosphate. The enzyme catalyses 2-(2-carboxy-4-methylthiazol-5-yl)ethyl phosphate + 4-amino-2-methyl-5-(diphosphooxymethyl)pyrimidine + 2 H(+) = thiamine phosphate + CO2 + diphosphate. It catalyses the reaction 4-methyl-5-(2-phosphooxyethyl)-thiazole + 4-amino-2-methyl-5-(diphosphooxymethyl)pyrimidine + H(+) = thiamine phosphate + diphosphate. The protein operates within cofactor biosynthesis; thiamine diphosphate biosynthesis; thiamine phosphate from 4-amino-2-methyl-5-diphosphomethylpyrimidine and 4-methyl-5-(2-phosphoethyl)-thiazole: step 1/1. In terms of biological role, condenses 4-methyl-5-(beta-hydroxyethyl)thiazole monophosphate (THZ-P) and 2-methyl-4-amino-5-hydroxymethyl pyrimidine pyrophosphate (HMP-PP) to form thiamine monophosphate (TMP). In Ruminiclostridium cellulolyticum (strain ATCC 35319 / DSM 5812 / JCM 6584 / H10) (Clostridium cellulolyticum), this protein is Thiamine-phosphate synthase.